Here is a 195-residue protein sequence, read N- to C-terminus: dCTP deaminase (195 aa).

Residues 110–115 (RSSLAR), Asp128, 136–138 (VLE), Tyr171, Lys178, and Gln182 contribute to the dCTP site. Catalysis depends on Glu138, which acts as the Proton donor/acceptor.

The protein belongs to the dCTP deaminase family. Homotrimer.

It catalyses the reaction dCTP + H2O + H(+) = dUTP + NH4(+). Its pathway is pyrimidine metabolism; dUMP biosynthesis; dUMP from dCTP (dUTP route): step 1/2. Catalyzes the deamination of dCTP to dUTP. This is dCTP deaminase from Idiomarina loihiensis (strain ATCC BAA-735 / DSM 15497 / L2-TR).